We begin with the raw amino-acid sequence, 95 residues long: Large ribosomal subunit protein bL25 (95 aa).

Belongs to the bacterial ribosomal protein bL25 family. In terms of assembly, part of the 50S ribosomal subunit; part of the 5S rRNA/L5/L18/L25 subcomplex. Contacts the 5S rRNA. Binds to the 5S rRNA independently of L5 and L18.

Its function is as follows. This is one of the proteins that binds to the 5S RNA in the ribosome where it forms part of the central protuberance. This is Large ribosomal subunit protein bL25 from Actinobacillus succinogenes (strain ATCC 55618 / DSM 22257 / CCUG 43843 / 130Z).